Consider the following 425-residue polypeptide: Glucan 1,3-beta-glucosidase (425 aa).

Residues 1–17 form the signal peptide; the sequence is MLLTFAPIFLLISSIVA. The active-site Proton donor is the Glu214. 2 disulfides stabilise this stretch: Cys301–Cys423 and Cys326–Cys352. Lys328 (nucleophile) is an active-site residue.

It belongs to the glycosyl hydrolase 5 (cellulase A) family.

Its subcellular location is the secreted. It carries out the reaction Successive hydrolysis of beta-D-glucose units from the non-reducing ends of (1-&gt;3)-beta-D-glucans, releasing alpha-glucose.. Its function is as follows. Beta-glucanases participate in the metabolism of beta-glucan, the main structural component of the cell wall. It could also function biosynthetically as a transglycosylase. This Candida oleophila (Yeast) protein is Glucan 1,3-beta-glucosidase (EXG1).